A 264-amino-acid polypeptide reads, in one-letter code: MFLRTVRSQAVRAAALHHTVAPALCMRPVLRTQTVAFSSTPVTLGKKKKGGKEPKAAAKAAAEEAVDEDLFMIEWNKFEDLSAKSVAAFAAKAKEIKAGNNSPDLINNIEVKISKDEVYQIKDIASVALKGGRTLSISVYDPSHTKQVTASILASDLNMNPQPQANSPQILNIPLPPPSAESRAEQQKELKALYNAFKADKKLTSGLAAIRDAFKKDHKKMADQKSIGKDVVKREDKKFEELQKAWTSKIEKEFKTVSDEIAKK.

This sequence belongs to the RRF family.

It localises to the mitochondrion. In terms of biological role, necessary for protein synthesis in mitochondria. Functions as a ribosome recycling factor in mitochondria. The chain is Ribosome-recycling factor, mitochondrial (RRF1) from Yarrowia lipolytica (strain CLIB 122 / E 150) (Yeast).